We begin with the raw amino-acid sequence, 351 residues long: Probable inactive tRNA-specific adenosine deaminase-like protein 3 (351 aa).

The residue at position 1 (M1) is an N-acetylmethionine. The interval M1–W26 is disordered. In terms of domain architecture, CMP/dCMP-type deaminase spans A171–F336. Zn(2+)-binding residues include H223, C291, and C294.

Belongs to the cytidine and deoxycytidylate deaminase family. ADAT3 subfamily. Zn(2+) serves as cofactor.

In Homo sapiens (Human), this protein is Probable inactive tRNA-specific adenosine deaminase-like protein 3 (ADAT3).